Here is a 207-residue protein sequence, read N- to C-terminus: LexA repressor (207 aa).

A DNA-binding region (H-T-H motif) is located at residues 28-48; that stretch reads VREIGEAVGLASSSTVHGHLA. Active-site for autocatalytic cleavage activity residues include Ser-129 and Lys-167.

It belongs to the peptidase S24 family. In terms of assembly, homodimer.

The catalysed reaction is Hydrolysis of Ala-|-Gly bond in repressor LexA.. Functionally, represses a number of genes involved in the response to DNA damage (SOS response), including recA and lexA. In the presence of single-stranded DNA, RecA interacts with LexA causing an autocatalytic cleavage which disrupts the DNA-binding part of LexA, leading to derepression of the SOS regulon and eventually DNA repair. The polypeptide is LexA repressor (Geobacillus sp. (strain WCH70)).